The chain runs to 977 residues: ATP-dependent RNA helicase DBP10 (977 aa).

The tract at residues 1–121 (MGIISKRKRH…NSEKSKHKKG (121 aa)) is disordered. A compositionally biased stretch (polar residues) spans 26–35 (ITSNIGLNTA). Residues 37 to 61 (SSDESESSGDDEEEVQDIVDFSDEE) show a composition bias toward acidic residues. Positions 70–81 (SNKTLTDNNSFP) are enriched in polar residues. Positions 121–149 (GSFPSFGFSKLILSNVHKKGFRQPTPIQR) match the Q motif motif. One can recognise a Helicase ATP-binding domain in the interval 152 to 324 (IPLILQKRDI…KAGLTNPVLV (173 aa)). 165–172 (ARTGSGKT) is a binding site for ATP. The DEAD box signature appears at 272–275 (DEAD). Disordered stretches follow at residues 377–403 (NKSL…KKGK) and 871–977 (KTGA…KRKF). Over residues 394–403 (QNSRKSKKGK) the composition is skewed to basic residues. Positions 403–554 (KFQKLKVSAS…SMYEASCKLM (152 aa)) constitute a Helicase C-terminal domain. The span at 878–894 (SIPTNLLSDPTTDSGSQ) shows a compositional bias: polar residues. The segment covering 910–921 (RLPDKFRDDYQS) has biased composition (basic and acidic residues). A compositionally biased stretch (basic residues) spans 961–977 (KEKKRQKNARPTKKRKF).

The protein belongs to the DEAD box helicase family. DDX54/DBP10 subfamily.

Its subcellular location is the nucleus. It localises to the nucleolus. It catalyses the reaction ATP + H2O = ADP + phosphate + H(+). Its function is as follows. ATP-binding RNA helicase involved in the biogenesis of 60S ribosomal subunits and is required for the normal formation of 25S and 5.8S rRNAs. This chain is ATP-dependent RNA helicase DBP10 (DBP10), found in Vanderwaltozyma polyspora (strain ATCC 22028 / DSM 70294 / BCRC 21397 / CBS 2163 / NBRC 10782 / NRRL Y-8283 / UCD 57-17) (Kluyveromyces polysporus).